Reading from the N-terminus, the 556-residue chain is Zinc finger protein GLI1 (556 aa).

Disordered stretches follow at residues 57–83 (TEHPGGAADGSRFSTPRGAGKLGKKRA), 133–178 (SLGY…TPAR), and 200–222 (KYPEEKSEGDISSPASTGTQDPL). Residues 135 to 148 (GYQNPPGQQKGQGQ) are compositionally biased toward low complexity. 5 C2H2-type zinc fingers span residues 247–272 (TNCYWDGCAKEFDTQEQLVHHINNEH), 280–307 (FVCHWAACSREQRPFKAQYMLVVHMRRH), 313–337 (HKCTFEGCNKAYSRLENLKTHLRSH), 343–368 (YVCEHEGCNKAFSNASDRAKHQNRTH), and 374–399 (YICKIPGCTKRYTDPSSLRKHVKTVH). Residues 295–303 (KAQYMLVVH) are interaction with DNA. Interaction with DNA regions lie at residues 357–362 (ASDRAK) and 387–393 (DPSSLRK). Positions 387–492 (DPSSLRKHVK…VEMTGNTGGS (106 aa)) are disordered. Residues 454–472 (SKPQPSPGGQSSCSSDRSP) show a composition bias toward low complexity.

The protein belongs to the GLI C2H2-type zinc-finger protein family.

It is found in the cytoplasm. Its subcellular location is the nucleus. Functionally, acts as a transcriptional activator. Binds to the DNA consensus sequence 5'-GACCACCCA-3'. May regulate the transcription of specific genes during normal development. May play a role in craniofacial development and digital development, as well as development of the central nervous system and gastrointestinal tract. Mediates SHH signaling. Plays a role in cell proliferation and differentiation via its role in SHH signaling. This Gallus gallus (Chicken) protein is Zinc finger protein GLI1 (GLI1).